Reading from the N-terminus, the 187-residue chain is Pyridoxal 5'-phosphate synthase subunit PdxT (187 aa).

47–49 (GES) lines the L-glutamine pocket. The active-site Nucleophile is the Cys-76. Residues Arg-102 and 128-129 (IR) contribute to the L-glutamine site. Residues His-165 and Glu-167 each act as charge relay system in the active site.

It belongs to the glutaminase PdxT/SNO family. In the presence of PdxS, forms a dodecamer of heterodimers. Only shows activity in the heterodimer.

The catalysed reaction is aldehydo-D-ribose 5-phosphate + D-glyceraldehyde 3-phosphate + L-glutamine = pyridoxal 5'-phosphate + L-glutamate + phosphate + 3 H2O + H(+). It catalyses the reaction L-glutamine + H2O = L-glutamate + NH4(+). It participates in cofactor biosynthesis; pyridoxal 5'-phosphate biosynthesis. In terms of biological role, catalyzes the hydrolysis of glutamine to glutamate and ammonia as part of the biosynthesis of pyridoxal 5'-phosphate. The resulting ammonia molecule is channeled to the active site of PdxS. In Methanococcus maripaludis (strain C5 / ATCC BAA-1333), this protein is Pyridoxal 5'-phosphate synthase subunit PdxT.